Here is a 558-residue protein sequence, read N- to C-terminus: Oxygen-dependent choline dehydrogenase (558 aa).

4-33 (DYIIIGAGSAGNVLATRLTEDSDTTVLLLE) lines the FAD pocket. H473 functions as the Proton acceptor in the catalytic mechanism.

The protein belongs to the GMC oxidoreductase family. The cofactor is FAD.

It catalyses the reaction choline + A = betaine aldehyde + AH2. It carries out the reaction betaine aldehyde + NAD(+) + H2O = glycine betaine + NADH + 2 H(+). It functions in the pathway amine and polyamine biosynthesis; betaine biosynthesis via choline pathway; betaine aldehyde from choline (cytochrome c reductase route): step 1/1. In terms of biological role, involved in the biosynthesis of the osmoprotectant glycine betaine. Catalyzes the oxidation of choline to betaine aldehyde and betaine aldehyde to glycine betaine at the same rate. The chain is Oxygen-dependent choline dehydrogenase from Citrobacter koseri (strain ATCC BAA-895 / CDC 4225-83 / SGSC4696).